The chain runs to 479 residues: ATP synthase subunit beta (479 aa).

Position 160-167 (160-167 (GGAGVGKT)) interacts with ATP.

It belongs to the ATPase alpha/beta chains family. F-type ATPases have 2 components, CF(1) - the catalytic core - and CF(0) - the membrane proton channel. CF(1) has five subunits: alpha(3), beta(3), gamma(1), delta(1), epsilon(1). CF(0) has three main subunits: a(1), b(2) and c(9-12). The alpha and beta chains form an alternating ring which encloses part of the gamma chain. CF(1) is attached to CF(0) by a central stalk formed by the gamma and epsilon chains, while a peripheral stalk is formed by the delta and b chains.

It localises to the cell inner membrane. It carries out the reaction ATP + H2O + 4 H(+)(in) = ADP + phosphate + 5 H(+)(out). Produces ATP from ADP in the presence of a proton gradient across the membrane. The catalytic sites are hosted primarily by the beta subunits. The sequence is that of ATP synthase subunit beta from Anaplasma phagocytophilum (strain HZ).